A 156-amino-acid polypeptide reads, in one-letter code: Large ribosomal subunit protein uL22 (156 aa).

It belongs to the universal ribosomal protein uL22 family. As to quaternary structure, part of the 50S ribosomal subunit.

Its function is as follows. This protein binds specifically to 23S rRNA. It makes multiple contacts with different domains of the 23S rRNA in the assembled 50S subunit and ribosome. The globular domain of the protein is located near the polypeptide exit tunnel on the outside of the subunit, while an extended beta-hairpin is found that lines the wall of the exit tunnel in the center of the 70S ribosome. This is Large ribosomal subunit protein uL22 from Sulfurisphaera tokodaii (strain DSM 16993 / JCM 10545 / NBRC 100140 / 7) (Sulfolobus tokodaii).